Consider the following 286-residue polypeptide: Bifunctional protein FolD (286 aa).

NADP(+) is bound by residues 165–167, serine 190, and valine 231; that span reads GRS.

It belongs to the tetrahydrofolate dehydrogenase/cyclohydrolase family. In terms of assembly, homodimer.

It carries out the reaction (6R)-5,10-methylene-5,6,7,8-tetrahydrofolate + NADP(+) = (6R)-5,10-methenyltetrahydrofolate + NADPH. The enzyme catalyses (6R)-5,10-methenyltetrahydrofolate + H2O = (6R)-10-formyltetrahydrofolate + H(+). Its pathway is one-carbon metabolism; tetrahydrofolate interconversion. In terms of biological role, catalyzes the oxidation of 5,10-methylenetetrahydrofolate to 5,10-methenyltetrahydrofolate and then the hydrolysis of 5,10-methenyltetrahydrofolate to 10-formyltetrahydrofolate. This Bacillus cereus (strain G9842) protein is Bifunctional protein FolD.